The primary structure comprises 276 residues: MDNARRKTPARLDAACFWQIWQRFDKEEKGYIRETELDAFFDHLLAKSGTEDTLMEENVQKVKEQLMTSHNVSKEGRILMKELASMFLSEDENFLLFFRLETPLDNSVEFMQIWRKYDADSSGFISAAELCNFLRDLFLHHKKNISEAELEEYTSTMMKIFDKNKDGRLDLNDLARILALQENFLLQFKMDASSTEERKRDFEKIFAHYDVSKTGALEGPEVDGFVKDMMELVQPSISGVDLDKFREILLRHCDVNKDGKIQKSELALCLGLKINP.

6 consecutive EF-hand domains span residues 12-47 (LDAA…LLAK), 58-93 (NVQK…EDEN), 105-140 (DNSV…LFLH), 149-184 (ELEE…QENF), 197-232 (ERKR…MMEL), and 240-276 (VDLD…KINP). Residues aspartate 25, tyrosine 31, glutamate 36, serine 73, glutamate 75, arginine 77, glutamate 82, aspartate 118, aspartate 120, serine 122, glutamate 129, aspartate 162, asparagine 164, aspartate 166, arginine 168, aspartate 173, aspartate 210, serine 212, threonine 214, glutamate 221, aspartate 254, asparagine 256, aspartate 258, lysine 260, and glutamate 265 each coordinate Ca(2+).

The protein resides in the cytoplasm. It is found in the secreted. It localises to the cytoplasmic vesicle. Its subcellular location is the secretory vesicle membrane. The polypeptide is Secretagogin (Scgn) (Mus musculus (Mouse)).